The primary structure comprises 756 residues: Ribonucleoside-diphosphate reductase subunit alpha (756 aa).

The ATP-cone domain occupies L5 to G95. ATP contacts are provided by residues K9, E15–K21, T55, and K91. Residue T209 participates in GDP binding. Cysteines 225 and 462 form a disulfide. DTTP is bound by residues D232–L234, R262, and R269. N437 serves as a coordination point for GDP. N437 (proton acceptor) is an active-site residue. C439 acts as the Cysteine radical intermediate in catalysis. Residues E441 and E623–S625 contribute to the GDP site. Residue E441 is the Proton acceptor of the active site.

It belongs to the ribonucleoside diphosphate reductase large chain family. Tetramer of two alpha and two beta subunits.

The enzyme catalyses a 2'-deoxyribonucleoside 5'-diphosphate + [thioredoxin]-disulfide + H2O = a ribonucleoside 5'-diphosphate + [thioredoxin]-dithiol. Under complex allosteric control mediated by deoxynucleoside triphosphates and ATP binding to separate specificity and activation sites on the alpha subunit. The type of nucleotide bound at the specificity site determines substrate preference. It seems probable that ATP makes the enzyme reduce CDP and UDP, dGTP favors ADP reduction and dTTP favors GDP reduction. Stimulated by ATP and inhibited by dATP binding to the activity site. Its function is as follows. Provides the precursors necessary for DNA synthesis. Catalyzes the biosynthesis of deoxyribonucleotides from the corresponding ribonucleotides. The chain is Ribonucleoside-diphosphate reductase subunit alpha (nrdA) from Haemophilus influenzae (strain ATCC 51907 / DSM 11121 / KW20 / Rd).